A 347-amino-acid chain; its full sequence is Phosphoribosylformylglycinamidine cyclo-ligase (347 aa).

The protein belongs to the AIR synthase family.

The protein resides in the cytoplasm. It catalyses the reaction 2-formamido-N(1)-(5-O-phospho-beta-D-ribosyl)acetamidine + ATP = 5-amino-1-(5-phospho-beta-D-ribosyl)imidazole + ADP + phosphate + H(+). Its pathway is purine metabolism; IMP biosynthesis via de novo pathway; 5-amino-1-(5-phospho-D-ribosyl)imidazole from N(2)-formyl-N(1)-(5-phospho-D-ribosyl)glycinamide: step 2/2. This Prochlorococcus marinus (strain MIT 9301) protein is Phosphoribosylformylglycinamidine cyclo-ligase.